A 184-amino-acid polypeptide reads, in one-letter code: Photosystem I assembly protein Ycf4 (184 aa).

The next 2 membrane-spanning stretches (helical) occupy residues 22-42 and 57-77; these read FCWA…GTSS and IIFF…LFIS.

It belongs to the Ycf4 family.

Its subcellular location is the plastid. It localises to the chloroplast thylakoid membrane. Seems to be required for the assembly of the photosystem I complex. This chain is Photosystem I assembly protein Ycf4, found in Draba nemorosa (Woodland whitlowgrass).